Consider the following 319-residue polypeptide: Tyrosine phosphatase-like protein N3 (319 aa).

Residues 7-285 form the Tyrosine-protein phosphatase domain; the sequence is SNLSIHEFWR…LIINKILLHS (279 aa).

It belongs to the protein-tyrosine phosphatase family.

This is Tyrosine phosphatase-like protein N3 (N7) from Microplitis demolitor bracovirus (isolate Webb) (MdBV).